A 34-amino-acid polypeptide reads, in one-letter code: Turripeptide OL127 (34 aa).

In terms of processing, contains 4 disulfide bonds. As to expression, expressed by the venom duct.

It is found in the secreted. In terms of biological role, acts as a neurotoxin by inhibiting an ion channel. The sequence is that of Turripeptide OL127 from Iotyrris olangoensis (Sea snail).